Here is a 385-residue protein sequence, read N- to C-terminus: Putative ESX-1 scaffolding and assembly protein SaeC (385 aa).

The protein resides in the cytoplasm. Its function is as follows. May be involved in assembly of the ESX-1 / type VII specialized secretion system (T7SS), which exports several proteins including EsxA and EsxB. Involved in DNA conjugation in recipient (MKD8) strain. This Mycolicibacterium smegmatis (strain ATCC 700084 / mc(2)155) (Mycobacterium smegmatis) protein is Putative ESX-1 scaffolding and assembly protein SaeC.